We begin with the raw amino-acid sequence, 119 residues long: Large ribosomal subunit protein bL20 (119 aa).

It belongs to the bacterial ribosomal protein bL20 family.

Its function is as follows. Binds directly to 23S ribosomal RNA and is necessary for the in vitro assembly process of the 50S ribosomal subunit. It is not involved in the protein synthesizing functions of that subunit. The chain is Large ribosomal subunit protein bL20 from Erythrobacter litoralis (strain HTCC2594).